The primary structure comprises 446 residues: D(1A) dopamine receptor (446 aa).

The Extracellular portion of the chain corresponds to 1–22 (MAPNTSTMDEAGLPAERDFSFR). N-linked (GlcNAc...) asparagine glycosylation occurs at Asn4. Residues 23-48 (ILTACFLSLLILSTLLGNTLVCAAVI) form a helical membrane-spanning segment. At 49–59 (RFRHLRSKVTN) the chain is on the cytoplasmic side. A helical transmembrane segment spans residues 60-86 (FFVISLAVSDLLVAVLVMPWKAVAEIA). Over 87–95 (GFWPLGPFC) the chain is Extracellular. Residues Cys95 and Cys186 are joined by a disulfide bond. A helical transmembrane segment spans residues 96–118 (NIWVAFDIMCSTASILNLCVISV). Topologically, residues 119–137 (DRYWAISSPFQYERKMTPK) are cytoplasmic. Residues 138–162 (AAFILISVAWTLSVLISFIPVQLSW) form a helical membrane-spanning segment. The Extracellular portion of the chain corresponds to 163-192 (HKAKPTWPLDGNFTSLEDTEDDNCDTRLSR). Residues 193 to 218 (TYAISSSLISFYIPVAIMIVTYTSIY) traverse the membrane as a helical segment. Over 219–272 (RIAQKQIRRISALERAAVHAKNCQTTAGNGNPVECAQSESSFKMSFKRETKVLK) the chain is Cytoplasmic. The helical transmembrane segment at 273–299 (TLSVIMGVFVCCWLPFFISNCMVPFCG) threads the bilayer. Topologically, residues 300 to 312 (SEETQPFCIDSIT) are extracellular. The chain crosses the membrane as a helical span at residues 313–337 (FDVFVWFGWANSSLNPIIYAFNADF). Residues 338–446 (QKAFSTLLGC…PVTHSGQHST (109 aa)) lie on the Cytoplasmic side of the membrane. Residues Cys347 and Cys351 are each lipidated (S-palmitoyl cysteine).

Belongs to the G-protein coupled receptor 1 family. In terms of assembly, interacts with DNAJC14 via its C-terminus PubMed:11331877. Interacts with DRD2. Interacts with DORIP1. N-glycosylated. Brain, in the striatum, the nucleus accumbens, and the olfactory tubercle.

Its subcellular location is the cell membrane. It localises to the endoplasmic reticulum membrane. It is found in the cell projection. The protein resides in the dendrite. The protein localises to the cilium membrane. Its subcellular location is the dendritic spine. Its function is as follows. Dopamine receptor whose activity is mediated by G proteins which activate adenylyl cyclase. The chain is D(1A) dopamine receptor (Drd1) from Rattus norvegicus (Rat).